A 174-amino-acid polypeptide reads, in one-letter code: Flavodoxin (174 aa).

The region spanning 4–165 is the Flavodoxin-like domain; sequence VGLFYGSDTG…RVEKWCKQIY (162 aa).

It belongs to the flavodoxin family. Requires FMN as cofactor.

Its function is as follows. Low-potential electron donor to a number of redox enzymes. The sequence is that of Flavodoxin (fldA) from Haemophilus influenzae (strain ATCC 51907 / DSM 11121 / KW20 / Rd).